We begin with the raw amino-acid sequence, 238 residues long: Zinc-finger homeodomain protein 11 (238 aa).

The ZF-HD dimerization-type; degenerate zinc finger occupies 12-59 (YRECMRNHAAKLGTYANDGCCEYTPDDGHPAGLLCAACGCHRNFHRKD). A DNA-binding region (homeobox) is located at residues 119 to 188 (RRRTRTKFTE…NHKAGGGGGG (70 aa)). Positions 183-200 (GGGGGGGGSGGPGAGGGA) are enriched in gly residues. The interval 183-238 (GGGGGGGGSGGPGAGGGAQTSSSTTRGGGDVGVGLSPAMGGDGEDDEEVRGSEMCM) is disordered.

In terms of assembly, homo- and heterodimer with other ZFHD proteins.

It localises to the nucleus. In terms of biological role, putative transcription factor. In Oryza sativa subsp. indica (Rice), this protein is Zinc-finger homeodomain protein 11 (ZHD11).